Here is a 164-residue protein sequence, read N- to C-terminus: Peptidyl-prolyl cis-trans isomerase A-like 4G (164 aa).

Residues 7–163 (FFDITVDGKP…KKITIADCGQ (157 aa)) form the PPIase cyclophilin-type domain.

This sequence belongs to the cyclophilin-type PPIase family. PPIase A subfamily.

The protein localises to the cytoplasm. It carries out the reaction [protein]-peptidylproline (omega=180) = [protein]-peptidylproline (omega=0). Its function is as follows. PPIases accelerate the folding of proteins. It catalyzes the cis-trans isomerization of proline imidic peptide bonds in oligopeptides. The sequence is that of Peptidyl-prolyl cis-trans isomerase A-like 4G (PPIAL4G) from Homo sapiens (Human).